The following is a 418-amino-acid chain: Replication factor C large subunit (418 aa).

ATP is bound at residue 47–54 (GSQGTGKT).

It belongs to the activator 1 small subunits family. RfcL subfamily. In terms of assembly, heteromultimer composed of small subunits (RfcS) and large subunits (RfcL).

Its function is as follows. Part of the RFC clamp loader complex which loads the PCNA sliding clamp onto DNA. The chain is Replication factor C large subunit from Thermoplasma acidophilum (strain ATCC 25905 / DSM 1728 / JCM 9062 / NBRC 15155 / AMRC-C165).